Here is a 278-residue protein sequence, read N- to C-terminus: Glycyl-dTMP PLP-dependent decarboxylase (278 aa).

It belongs to the pyridoxal-phosphate-dependent aminodecarboxylase family.

It carries out the reaction 5-C(alpha)-glycyl-dTMP in DNA + H(+) = 5-aminoethyl-dUMP in DNA + CO2. In terms of biological role, converts 5-Calpha-glycinylthymidine (Calpha-GlyT) into 5-aminoethyl-2'-deoxyuridine (5-NedU) as a step in the pathway leading to thymidine hypermodifications in the viral genome. As a final result of the pathway of hypermodification, 5-aminoethyl-2'-deoxyuridine (5-NedU) substitutes for about 30% of thymidines in the viral DNA. These modifications probably prevent degradation of viral genome by the host restriction-modification antiviral defense system. This is Glycyl-dTMP PLP-dependent decarboxylase from Pseudomonas aeruginosa.